A 377-amino-acid chain; its full sequence is Pseudouridylate synthase RPUSD4, mitochondrial (377 aa).

The transit peptide at 1–35 (MAAPLLGSPGLQVLSMSSRTGKLFTPSSRSFCSRA) directs the protein to the mitochondrion. Asp-153 is an active-site residue.

Belongs to the pseudouridine synthase RluA family. Interacts with 16S mt-rRNA, mt-tRNA(Phe) and mt-tRNA(Met). Forms a regulatory protein-RNA complex, consisting of RCC1L, NGRN, RPUSD3, RPUSD4, TRUB2, FASTKD2 and 16S mt-rRNA.

The protein localises to the mitochondrion matrix. It localises to the nucleus. It is found in the cytoplasm. The catalysed reaction is uridine in 5S rRNA = pseudouridine in 5S rRNA. It catalyses the reaction a uridine in tRNA = a pseudouridine in tRNA. The enzyme catalyses a uridine in mRNA = a pseudouridine in mRNA. Functionally, catalyzes uridine to pseudouridine isomerization (pseudouridylation) of different mitochondrial RNA substrates. Acts on position 1397 in 16S mitochondrial ribosomal RNA (16S mt-rRNA). This modification is required for the assembly of 16S mt-rRNA into a functional mitochondrial ribosome. As a component of a functional protein-RNA module, consisting of RCC1L, NGRN, RPUSD3, RPUSD4, TRUB2, FASTKD2 and 16S mt-rRNA, controls 16S mt-rRNA abundance and is required for intra-mitochondrial translation. Acts on position 39 in mitochondrial tRNA(Phe). Also catalyzes pseudouridylation of mRNAs in nucleus: acts as a regulator of pre-mRNA splicing by mediating pseudouridylation of pre-mRNAs at locations associated with alternatively spliced regions. Pseudouridylation of pre-mRNAs near splice sites directly regulates mRNA splicing and mRNA 3'-end processing. The protein is Pseudouridylate synthase RPUSD4, mitochondrial of Rattus norvegicus (Rat).